A 231-amino-acid polypeptide reads, in one-letter code: ATP-dependent dethiobiotin synthetase BioD (231 aa).

Residue 12–17 participates in ATP binding; that stretch reads DVGKTV. Thr16 is a binding site for Mg(2+). The active site involves Lys37. Position 41 (Thr41) interacts with substrate. Residues Asp50, 109-112, 170-171, and 200-202 each bind ATP; these read EGAG, GS, and PAG. Mg(2+) is bound by residues Asp50 and Glu109.

It belongs to the dethiobiotin synthetase family. Homodimer. Mg(2+) is required as a cofactor.

Its subcellular location is the cytoplasm. It catalyses the reaction (7R,8S)-7,8-diammoniononanoate + CO2 + ATP = (4R,5S)-dethiobiotin + ADP + phosphate + 3 H(+). The protein operates within cofactor biosynthesis; biotin biosynthesis; biotin from 7,8-diaminononanoate: step 1/2. In terms of biological role, catalyzes a mechanistically unusual reaction, the ATP-dependent insertion of CO2 between the N7 and N8 nitrogen atoms of 7,8-diaminopelargonic acid (DAPA, also called 7,8-diammoniononanoate) to form a ureido ring. In Rhodococcus jostii (strain RHA1), this protein is ATP-dependent dethiobiotin synthetase BioD.